We begin with the raw amino-acid sequence, 38 residues long: Large ribosomal subunit protein bL36 (38 aa).

Belongs to the bacterial ribosomal protein bL36 family.

This Phytoplasma mali (strain AT) protein is Large ribosomal subunit protein bL36.